The following is an 831-amino-acid chain: V-type proton ATPase subunit a (831 aa).

At 1–418 (MSPSLFRSEE…DSYGIATYRE (418 aa)) the chain is on the cytoplasmic side. A helical membrane pass occupies residues 419–437 (VNHGIVAIVTFPFLFAIMF). The Vacuolar segment spans residues 438–439 (GD). Residues 440 to 456 (LGHGAIMASVALMFVLY) traverse the membrane as a helical segment. Over 457-471 (EKTLGAKKDLDEIVG) the chain is Cytoplasmic. The helical transmembrane segment at 472–501 (MVFYGRYIVLLMGLFSMYVGFVYNDLFSKP) threads the bilayer. Over 502–548 (MSIFSSRWVWPVKSEEAIARAVQVGTYPIGIDPTWHSADNNLLFMNS) the chain is Vacuolar. Residues 549–568 (YKMKLSIILGVIHMTFCLFL) form a helical membrane-spanning segment. Residues 569–586 (SLSNYRFFKRKLDIYAVF) lie on the Cytoplasmic side of the membrane. Residues 587–607 (VPSLIFLEAIFGYLVITIVYK) form a helical membrane-spanning segment. The Vacuolar segment spans residues 608–650 (WCIDWKAKDLQPPSLLNMLILMFLSPGTLEDQLYPGQKYLQVG). A helical transmembrane segment spans residues 651–670 (LVIAALICVPWLLIVKPFVL). At 671 to 723 (WRRHSNEENKYQSLNSDLPNVDEADALMAVDSQEKQAEPFELGEVVIHQVIHT) the chain is on the cytoplasmic side. The chain crosses the membrane as a helical span at residues 724 to 748 (IEFCLGCVSHTASYLRLWALSLAHN). The Vacuolar segment spans residues 749–769 (QLSSVLWNMTLANGFRMTGIV). The helical transmembrane segment at 770 to 808 (GSIFVVILFGFWFIATCVVLVAMEGTSAMLHSLRLHWVE) threads the bilayer. At 809 to 831 (GMSKHFEGEGYAFTPFTFKVTAE) the chain is on the cytoplasmic side.

The protein belongs to the V-ATPase 116 kDa subunit family. In terms of assembly, V-ATPase is a heteromultimeric enzyme composed of a peripheral catalytic V1 complex (components A to H) attached to an integral membrane V0 proton pore complex (components: a, c, c', c'', d, e, f and VOA1).

It is found in the vacuole membrane. In terms of biological role, subunit of the V0 complex of vacuolar(H+)-ATPase (V-ATPase), a multisubunit enzyme composed of a peripheral complex (V1) that hydrolyzes ATP and a membrane integral complex (V0) that translocates protons. V-ATPase is responsible for acidifying and maintaining the pH of intracellular compartments. The protein is V-type proton ATPase subunit a (vph1) of Schizosaccharomyces pombe (strain 972 / ATCC 24843) (Fission yeast).